A 143-amino-acid chain; its full sequence is Endoribonuclease YbeY (143 aa).

Residues His109, His113, and His119 each coordinate Zn(2+).

This sequence belongs to the endoribonuclease YbeY family. Zn(2+) is required as a cofactor.

The protein localises to the cytoplasm. In terms of biological role, single strand-specific metallo-endoribonuclease involved in late-stage 70S ribosome quality control and in maturation of the 3' terminus of the 16S rRNA. This chain is Endoribonuclease YbeY, found in Carboxydothermus hydrogenoformans (strain ATCC BAA-161 / DSM 6008 / Z-2901).